The primary structure comprises 433 residues: Pyroglutamylated RF-amide peptide receptor (433 aa).

Residues 1 to 46 (MQALNITAEQFSRLLSAHNLTREQFIHRYGLRPLVYTPELPARAKV) lie on the Extracellular side of the membrane. Residues N5 and N19 are each glycosylated (N-linked (GlcNAc...) asparagine). A helical membrane pass occupies residues 47–67 (AFALAGALIFALALFGNSLVI). The Cytoplasmic portion of the chain corresponds to 68–81 (YVVTRSKAMRTVTN). Residues 82–102 (IFICSLALSDLLIAFFCIPVT) form a helical membrane-spanning segment. The Extracellular portion of the chain corresponds to 103-120 (MLQNISDKWLGGAFICKM). The chain crosses the membrane as a helical span at residues 121 to 141 (VPFVQSTAVVTEILTMTCIAV). The Cytoplasmic portion of the chain corresponds to 142–162 (ERHQGLVHPFKMKWQYTTRRA). Residues 163-183 (FTILGVVWLAAIIVGSPMWHV) form a helical membrane-spanning segment. The Extracellular portion of the chain corresponds to 184–212 (QRLEIKYDFLYEKEHICCLEEWASPVHQR). A helical membrane pass occupies residues 213–233 (IYSTFILVILFLLPLVVMLVL). Residues 234 to 271 (YSKIGYELWIKKRVGDSSALQTIHGKEMSKIARKKKRA) lie on the Cytoplasmic side of the membrane. The helical transmembrane segment at 272 to 292 (VIMMVTVVALFAACWAPFHVV) threads the bilayer. Over 293 to 313 (HMMVEYSNFEKEYDDVTIKMV) the chain is Extracellular. A helical transmembrane segment spans residues 314–334 (FAVAQTIGFFNSICNPFVYAF). The Cytoplasmic portion of the chain corresponds to 335–433 (MNENFKKNFL…NSTFGSGHEL (99 aa)). The disordered stretch occupies residues 356–389 (SSPARKPGNSGISMMQKRAKLSRPQRPVEETKGD).

It belongs to the G-protein coupled receptor 1 family. Highly expressed in the adrenal gland and at moderate levels in the eye and testis. Expressed widely in the brain with high levels in the hypothalamus and moderate levels in the amygdala, basal forebrain, cortex, medulla oblongata, midbrain and thalamus.

It localises to the cell membrane. Functionally, receptor for the orexigenic neuropeptide QRFP. The activity of this receptor is mediated by G proteins that modulate adenylate cyclase activity and intracellular calcium levels. In Rattus norvegicus (Rat), this protein is Pyroglutamylated RF-amide peptide receptor (Qrfpr).